Reading from the N-terminus, the 218-residue chain is Large ribosomal subunit protein bL25 (218 aa).

Positions 187 to 218 (SATAAVEEAKEDGAPEESAQGQGAAEAQETGK) are disordered. The segment covering 202 to 218 (EESAQGQGAAEAQETGK) has biased composition (low complexity).

It belongs to the bacterial ribosomal protein bL25 family. CTC subfamily. As to quaternary structure, part of the 50S ribosomal subunit; part of the 5S rRNA/L5/L18/L25 subcomplex. Contacts the 5S rRNA. Binds to the 5S rRNA independently of L5 and L18.

Its function is as follows. This is one of the proteins that binds to the 5S RNA in the ribosome where it forms part of the central protuberance. This chain is Large ribosomal subunit protein bL25, found in Anaplasma marginale (strain Florida).